Consider the following 437-residue polypeptide: GTPase Der (437 aa).

EngA-type G domains are found at residues 3–167 (NLVA…KKES) and 176–352 (PRFA…ENRM). Residues 9 to 16 (GRPNVGKS), 56 to 60 (DTGGW), 119 to 122 (NKTD), 182 to 189 (GRPNAGKS), 229 to 233 (DTAGI), and 294 to 297 (NKWD) contribute to the GTP site. The 85-residue stretch at 353–437 (IKIPTARLNE…TPINIYIRQK (85 aa)) folds into the KH-like domain.

It belongs to the TRAFAC class TrmE-Era-EngA-EngB-Septin-like GTPase superfamily. EngA (Der) GTPase family. Associates with the 50S ribosomal subunit.

GTPase that plays an essential role in the late steps of ribosome biogenesis. The polypeptide is GTPase Der (Bacteroides fragilis (strain ATCC 25285 / DSM 2151 / CCUG 4856 / JCM 11019 / LMG 10263 / NCTC 9343 / Onslow / VPI 2553 / EN-2)).